The following is a 119-amino-acid chain: Large ribosomal subunit protein uL22 (119 aa).

It belongs to the universal ribosomal protein uL22 family. As to quaternary structure, part of the 50S ribosomal subunit.

Its function is as follows. This protein binds specifically to 23S rRNA; its binding is stimulated by other ribosomal proteins, e.g. L4, L17, and L20. It is important during the early stages of 50S assembly. It makes multiple contacts with different domains of the 23S rRNA in the assembled 50S subunit and ribosome. In terms of biological role, the globular domain of the protein is located near the polypeptide exit tunnel on the outside of the subunit, while an extended beta-hairpin is found that lines the wall of the exit tunnel in the center of the 70S ribosome. This is Large ribosomal subunit protein uL22 from Microcystis aeruginosa (strain NIES-843 / IAM M-2473).